We begin with the raw amino-acid sequence, 315 residues long: MKHLLTAADLSREDATAILDNADRFREALVGREVKKLPTLRGRTIITMFYENSTRTRVSFEVAGKWMSADVINVSSSGSSVAKGESLRDTALTLRAAGADALIIRHPASGAAQQLAAWTLDEHGGPSIINAGDGTHEHPTQALLDALTIRQRLGSVEGKRVVIVGDVLHSRVARSNVALLHTLGAEVVLVAPPTLLPVGVADWPVTVSQDIDAELPLADAVLMLRVQAERMNGGFFPSSREYSVRYGLSEKRQSRLAEHAVVLHPGPMLRGMEIAYSVADSSQSAVLQQVSNGVHVRMAVLFHLLVGSEQEAISA.

The carbamoyl phosphate site is built by Arg55 and Thr56. Lys83 contributes to the L-aspartate binding site. 3 residues coordinate carbamoyl phosphate: Arg105, His138, and Gln141. Residues Arg171 and Arg225 each coordinate L-aspartate. Positions 266 and 267 each coordinate carbamoyl phosphate.

It belongs to the aspartate/ornithine carbamoyltransferase superfamily. ATCase family. In terms of assembly, heterododecamer (2C3:3R2) of six catalytic PyrB chains organized as two trimers (C3), and six regulatory PyrI chains organized as three dimers (R2).

The enzyme catalyses carbamoyl phosphate + L-aspartate = N-carbamoyl-L-aspartate + phosphate + H(+). It functions in the pathway pyrimidine metabolism; UMP biosynthesis via de novo pathway; (S)-dihydroorotate from bicarbonate: step 2/3. In terms of biological role, catalyzes the condensation of carbamoyl phosphate and aspartate to form carbamoyl aspartate and inorganic phosphate, the committed step in the de novo pyrimidine nucleotide biosynthesis pathway. The protein is Aspartate carbamoyltransferase catalytic subunit of Mycolicibacterium vanbaalenii (strain DSM 7251 / JCM 13017 / BCRC 16820 / KCTC 9966 / NRRL B-24157 / PYR-1) (Mycobacterium vanbaalenii).